The following is a 1877-amino-acid chain: Protein TIC 214 (1877 aa).

A run of 6 helical transmembrane segments spans residues 18–38, 67–87, 90–110, 127–147, 175–195, and 224–244; these read IINS…FSIG, FIAG…HLAL, PHTI…WNNH, LSIQ…HFIL, VGWL…LVWI, and IFSI…PSPI. Residues 249–258 are compositionally biased toward basic and acidic residues; sequence FKETSETEER. The disordered stretch occupies residues 249-308; it reads FKETSETEERGEGEEETDVEIETTFETKGTRQEQEGSTEEDPSLFSEEKEDPDKIDEREE. 2 stretches are compositionally biased toward acidic residues: residues 259 to 271 and 284 to 298; these read GEGE…EIET and GSTE…EEKE. Over residues 299-308 the composition is skewed to basic and acidic residues; it reads DPDKIDEREE.

It belongs to the TIC214 family. Part of the Tic complex.

The protein resides in the plastid. It localises to the chloroplast inner membrane. Its function is as follows. Involved in protein precursor import into chloroplasts. May be part of an intermediate translocation complex acting as a protein-conducting channel at the inner envelope. The protein is Protein TIC 214 of Eucalyptus globulus subsp. globulus (Tasmanian blue gum).